Here is a 62-residue protein sequence, read N- to C-terminus: DNA-directed RNA polymerase subunit Rpo10 (62 aa).

Cys6, Cys9, Cys43, and Cys44 together coordinate Zn(2+).

The protein belongs to the archaeal Rpo10/eukaryotic RPB10 RNA polymerase subunit family. As to quaternary structure, part of the RNA polymerase complex. Requires Zn(2+) as cofactor.

The protein resides in the cytoplasm. It carries out the reaction RNA(n) + a ribonucleoside 5'-triphosphate = RNA(n+1) + diphosphate. DNA-dependent RNA polymerase (RNAP) catalyzes the transcription of DNA into RNA using the four ribonucleoside triphosphates as substrates. This chain is DNA-directed RNA polymerase subunit Rpo10, found in Methanococcoides burtonii (strain DSM 6242 / NBRC 107633 / OCM 468 / ACE-M).